Reading from the N-terminus, the 93-residue chain is Insertion element ISR1 uncharacterized 11 kDa protein A1 (93 aa).

Disordered regions lie at residues 14–33 and 68–93; these read RRAR…QERR and RRRA…SAGR.

The chain is Insertion element ISR1 uncharacterized 11 kDa protein A1 from Rhizobium sp.